The sequence spans 403 residues: Propionate kinase (403 aa).

Belongs to the acetokinase family. PduW subfamily.

It localises to the cytoplasm. The enzyme catalyses propanoate + ATP = propanoyl phosphate + ADP. The protein operates within polyol metabolism; 1,2-propanediol degradation. Works with phosphate acetyltransferase (pta) to capture exogenous propionate and regenerate propionyl-CoA during degradation of 1,2-propanediol (1,2-PD). The chain is Propionate kinase from Citrobacter rodentium (strain ICC168) (Citrobacter freundii biotype 4280).